The chain runs to 225 residues: Agamous-like MADS-box protein TM6 (225 aa).

The MADS-box domain occupies 1-61; sequence MGRGKIEIKR…GKFHEYTSPT (61 aa). The K-box domain occupies 84-174; that stretch reads YERMQENLRK…LLNFEAKCDD (91 aa).

Expressed during flower development in stamens, petals and carpels. Expressed in fruits and seeds.

It localises to the nucleus. Its function is as follows. Probable transcription factor involved in flower development. The polypeptide is Agamous-like MADS-box protein TM6 (Vitis vinifera (Grape)).